The chain runs to 97 residues: Kunitz-type trypsin inhibitor 1 (97 aa).

Belongs to the protease inhibitor I3 (leguminous Kunitz-type inhibitor) family.

Functionally, exhibits Kunitz trypsin protease inhibitor activity. The sequence is that of Kunitz-type trypsin inhibitor 1 from Selenicereus costaricensis (Red-fleshed dragon fruit).